The primary structure comprises 390 residues: Tuftelin (390 aa).

2 coiled-coil regions span residues 88-126 (DKMI…KLDR) and 162-351 (DTHI…IEKQ). Ser171 is modified (phosphoserine).

This sequence belongs to the tuftelin family. In terms of assembly, interacts with TFIP11. As to expression, present in the extracellular enamel and is mainly associated with the crystal component.

Its subcellular location is the secreted. In terms of biological role, involved in the structural organization of the epidermis. Involved in the mineralization and structural organization of enamel. In Bos taurus (Bovine), this protein is Tuftelin (TUFT1).